We begin with the raw amino-acid sequence, 327 residues long: ATP-dependent 6-phosphofructokinase (327 aa).

Residues Gly11, 72–73 (RS), and 102–105 (GDGS) each bind ATP. Residue Asp103 participates in Mg(2+) binding. Position 127–129 (127–129 (TID)) interacts with substrate. Catalysis depends on Asp129, which acts as the Proton acceptor. Arg156 is a binding site for ADP. Substrate-binding positions include Arg164 and 171-173 (MGR). Position 187–189 (187–189 (GAE)) interacts with ADP. Residues Glu224, Arg245, and 251-254 (HIQR) contribute to the substrate site.

It belongs to the phosphofructokinase type A (PFKA) family. ATP-dependent PFK group I subfamily. Prokaryotic clade 'B1' sub-subfamily. As to quaternary structure, homotetramer. It depends on Mg(2+) as a cofactor.

Its subcellular location is the cytoplasm. The enzyme catalyses beta-D-fructose 6-phosphate + ATP = beta-D-fructose 1,6-bisphosphate + ADP + H(+). Its pathway is carbohydrate degradation; glycolysis; D-glyceraldehyde 3-phosphate and glycerone phosphate from D-glucose: step 3/4. With respect to regulation, allosterically activated by ADP and other diphosphonucleosides, and allosterically inhibited by phosphoenolpyruvate. Catalyzes the phosphorylation of D-fructose 6-phosphate to fructose 1,6-bisphosphate by ATP, the first committing step of glycolysis. The sequence is that of ATP-dependent 6-phosphofructokinase from Sulfurovum sp. (strain NBC37-1).